We begin with the raw amino-acid sequence, 1052 residues long: Lateral signaling target protein 2 homolog (1052 aa).

5 disordered regions span residues 311–348 (YSSI…TSPH), 379–455 (PSML…DSDS), 506–539 (DEFG…STSA), 551–678 (LRLP…ASSF), and 814–973 (NTID…IPDG). 3 stretches are compositionally biased toward low complexity: residues 312-346 (SSIE…STTS), 379-392 (PSML…TPTA), and 400-419 (PSHS…NPPA). Residues 422-455 (SEDDDDDDEEREDDEEECGMLDSDEQDLNDDSDS) are compositionally biased toward acidic residues. Over residues 554–574 (PSSSSENEQTTGSNQQSTIKT) the composition is skewed to polar residues. A phosphoserine mark is found at Ser555 and Ser556. Composition is skewed to basic residues over residues 588–614 (RQRH…HHQQ) and 625–644 (SHHH…ARKR). The span at 652–661 (STTAEQQQTI) shows a compositional bias: polar residues. Low complexity predominate over residues 824-842 (NNNNNNNNNSGSSSSSNSS). Ser854 is subject to Phosphoserine. Positions 872–915 (QQQQQQQAQLQLQMQRQRNNSVGSNSPSSSSSSSSSSEHNSPIS) are enriched in low complexity. The span at 926–935 (SNSASMPSIG) shows a compositional bias: polar residues. Residues 936–963 (STATTAAATAAATATTTTSATTTTTTTT) show a composition bias toward low complexity. The FYVE-type zinc finger occupies 972–1032 (DGKAPRCMSC…VCRECYVREV (61 aa)). Zn(2+) is bound by residues Cys978, Cys981, Cys994, Cys997, Cys1002, Cys1005, Cys1024, and Cys1027.

The protein belongs to the lst-2 family.

Its function is as follows. Negative regulator of epidermal growth factor receptor (EGFR) signaling. The protein is Lateral signaling target protein 2 homolog of Drosophila virilis (Fruit fly).